Reading from the N-terminus, the 259-residue chain is MDSTNQNLFASLSKKGPVRKENQDFSVVTFNRFGQLMSLVCDGLGGYKGGKMASALVSEVFTKSFTVFDFHSQTERAVKQWFEITLIEARRTLEQYFQTIKRNQVQFARMATTLVLSIISKQNIWTFWVGDSRAYLINSYQSLQITEDHNLYNQLLQMHATPDVIASYKDKLLALTATVSKDQERQLKYSFRCDVVNAWDFLLLCSDGLYNFLDPNCFYEVITSAPNLKKAVTQLAKLSLDNASNDNITLNLINLKQWH.

The PPM-type phosphatase domain occupies 8–255 (LFASLSKKGP…DNITLNLINL (248 aa)).

It carries out the reaction O-phospho-L-seryl-[protein] + H2O = L-seryl-[protein] + phosphate. It catalyses the reaction O-phospho-L-threonyl-[protein] + H2O = L-threonyl-[protein] + phosphate. The polypeptide is Putative protein phosphatase (Mycoplasma pneumoniae (strain ATCC 29342 / M129 / Subtype 1) (Mycoplasmoides pneumoniae)).